We begin with the raw amino-acid sequence, 292 residues long: Ribosomal protein L11 methyltransferase (292 aa).

S-adenosyl-L-methionine contacts are provided by threonine 144, glycine 165, aspartate 187, and asparagine 229.

Belongs to the methyltransferase superfamily. PrmA family.

It is found in the cytoplasm. The catalysed reaction is L-lysyl-[protein] + 3 S-adenosyl-L-methionine = N(6),N(6),N(6)-trimethyl-L-lysyl-[protein] + 3 S-adenosyl-L-homocysteine + 3 H(+). Methylates ribosomal protein L11. The protein is Ribosomal protein L11 methyltransferase of Pseudomonas fluorescens (strain Pf0-1).